The sequence spans 214 residues: MSKVSSAVLRQGVATILKEKKERKFVETVELQIALKNYDPDKDKRFAGSVKLPNITKANYKVCVLGDAQACEAAQKENIPFMDVDALKALNKDKKLVKKLARKYNAFLASDSVLRQLQKILGPGLNKAGKFPTLLGKNEDLKVKINELQCQVKFQLKKVLCMGVAVGNVKLTEDQLVANIERSISFLVSLLKKGWQNIKCLYIKSSMGAPIKIY.

This sequence belongs to the universal ribosomal protein uL1 family. In terms of assembly, component of the large ribosomal subunit.

The protein resides in the cytoplasm. Component of the large ribosomal subunit. The ribosome is a large ribonucleoprotein complex responsible for the synthesis of proteins in the cell. This is Large ribosomal subunit protein uL1 (RPL10A) from Entamoeba histolytica (strain ATCC 30459 / HM-1:IMSS / ABRM).